A 297-amino-acid chain; its full sequence is Probable porphobilinogen deaminase (297 aa).

Cysteine 233 is subject to S-(dipyrrolylmethanemethyl)cysteine.

Belongs to the HMBS family. The cofactor is dipyrromethane.

It carries out the reaction 4 porphobilinogen + H2O = hydroxymethylbilane + 4 NH4(+). It participates in porphyrin-containing compound metabolism; protoporphyrin-IX biosynthesis; coproporphyrinogen-III from 5-aminolevulinate: step 2/4. Its function is as follows. Tetrapolymerization of the monopyrrole PBG into the hydroxymethylbilane pre-uroporphyrinogen in several discrete steps. In Thermoplasma volcanium (strain ATCC 51530 / DSM 4299 / JCM 9571 / NBRC 15438 / GSS1), this protein is Probable porphobilinogen deaminase.